Consider the following 37-residue polypeptide: Large ribosomal subunit protein bL36c (37 aa).

The protein belongs to the bacterial ribosomal protein bL36 family.

Its subcellular location is the plastid. The protein localises to the chloroplast. The chain is Large ribosomal subunit protein bL36c from Oenothera argillicola (Appalachian evening primrose).